Here is a 143-residue protein sequence, read N- to C-terminus: Transcriptional regulator MraZ (143 aa).

SpoVT-AbrB domains are found at residues 5-47 (EYKH…SLKE) and 76-119 (ACEC…SENN).

The protein belongs to the MraZ family. As to quaternary structure, forms oligomers.

It localises to the cytoplasm. It is found in the nucleoid. The sequence is that of Transcriptional regulator MraZ from Caldicellulosiruptor bescii (strain ATCC BAA-1888 / DSM 6725 / KCTC 15123 / Z-1320) (Anaerocellum thermophilum).